We begin with the raw amino-acid sequence, 111 residues long: Phosphoribosyl-ATP pyrophosphatase (111 aa).

This sequence belongs to the PRA-PH family.

The protein resides in the cytoplasm. It catalyses the reaction 1-(5-phospho-beta-D-ribosyl)-ATP + H2O = 1-(5-phospho-beta-D-ribosyl)-5'-AMP + diphosphate + H(+). It functions in the pathway amino-acid biosynthesis; L-histidine biosynthesis; L-histidine from 5-phospho-alpha-D-ribose 1-diphosphate: step 2/9. This chain is Phosphoribosyl-ATP pyrophosphatase (hisE), found in Pseudomonas aeruginosa (strain ATCC 15692 / DSM 22644 / CIP 104116 / JCM 14847 / LMG 12228 / 1C / PRS 101 / PAO1).